Consider the following 62-residue polypeptide: Large ribosomal subunit protein bL28 (62 aa).

This sequence belongs to the bacterial ribosomal protein bL28 family.

This chain is Large ribosomal subunit protein bL28, found in Frankia casuarinae (strain DSM 45818 / CECT 9043 / HFP020203 / CcI3).